We begin with the raw amino-acid sequence, 116 residues long: Mercuric transport protein MerT (116 aa).

Transmembrane regions (helical) follow at residues 16–36 (LAAILASACCLGPLVLIALGF) and 46–66 (VLEPYRPIFIGAALVALFFAW). 2 residues coordinate Hg(2+): Cys-24 and Cys-25. Hg(2+)-binding residues include Cys-76 and Cys-82. The helical transmembrane segment at 94-114 (IFWVVAALVLVALGFPYVMPF) threads the bilayer.

It belongs to the MerT family.

The protein localises to the cell inner membrane. Functionally, involved in mercury resistance. Probably transfers a mercuric ion from the periplasmic Hg(2+)-binding protein MerP to the cytoplasmic mercuric reductase MerA. This chain is Mercuric transport protein MerT, found in Serratia marcescens.